Consider the following 291-residue polypeptide: N-acetylmannosamine kinase (291 aa).

ATP contacts are provided by residues 5 to 12 (AIDIGGTK) and 132 to 139 (GVGGGVVS). Zn(2+) is bound by residues H156, C166, C168, and C173.

The protein belongs to the ROK (NagC/XylR) family. NanK subfamily. Homodimer.

It carries out the reaction an N-acyl-D-mannosamine + ATP = an N-acyl-D-mannosamine 6-phosphate + ADP + H(+). Its pathway is amino-sugar metabolism; N-acetylneuraminate degradation; D-fructose 6-phosphate from N-acetylneuraminate: step 2/5. Its function is as follows. Catalyzes the phosphorylation of N-acetylmannosamine (ManNAc) to ManNAc-6-P. This chain is N-acetylmannosamine kinase, found in Escherichia coli (strain K12 / MC4100 / BW2952).